We begin with the raw amino-acid sequence, 447 residues long: Probable asparagine--tRNA ligase, cytoplasmic (447 aa).

This sequence belongs to the class-II aminoacyl-tRNA synthetase family.

The protein resides in the cytoplasm. It carries out the reaction tRNA(Asn) + L-asparagine + ATP = L-asparaginyl-tRNA(Asn) + AMP + diphosphate + H(+). The protein is Probable asparagine--tRNA ligase, cytoplasmic of Vairimorpha ceranae (strain BRL01) (Microsporidian parasite).